A 185-amino-acid chain; its full sequence is Protein GrpE (185 aa).

Residues 1–20 (MSQEKKEELQSEAQVTKEET) show a composition bias toward basic and acidic residues. The tract at residues 1–28 (MSQEKKEELQSEAQVTKEETPQANEAAA) is disordered.

It belongs to the GrpE family. Homodimer.

It is found in the cytoplasm. Functionally, participates actively in the response to hyperosmotic and heat shock by preventing the aggregation of stress-denatured proteins, in association with DnaK and GrpE. It is the nucleotide exchange factor for DnaK and may function as a thermosensor. Unfolded proteins bind initially to DnaJ; upon interaction with the DnaJ-bound protein, DnaK hydrolyzes its bound ATP, resulting in the formation of a stable complex. GrpE releases ADP from DnaK; ATP binding to DnaK triggers the release of the substrate protein, thus completing the reaction cycle. Several rounds of ATP-dependent interactions between DnaJ, DnaK and GrpE are required for fully efficient folding. The chain is Protein GrpE from Sulfurimonas denitrificans (strain ATCC 33889 / DSM 1251) (Thiomicrospira denitrificans (strain ATCC 33889 / DSM 1251)).